A 103-amino-acid chain; its full sequence is Small ribosomal subunit protein uS10 (103 aa).

Belongs to the universal ribosomal protein uS10 family. In terms of assembly, part of the 30S ribosomal subunit.

Involved in the binding of tRNA to the ribosomes. The chain is Small ribosomal subunit protein uS10 from Syntrophobacter fumaroxidans (strain DSM 10017 / MPOB).